Here is an 861-residue protein sequence, read N- to C-terminus: DNA topoisomerase 1 (861 aa).

The Toprim domain maps to 3-141 (KSLVIVESPA…KFSRVVFNEI (139 aa)). Positions 9 and 110 each coordinate Mg(2+). Positions 157-572 (NMNRVHAQQA…DFFKKFSEQL (416 aa)) constitute a Topo IA-type catalytic domain. The tract at residues 191–196 (SAGRVQ) is interaction with DNA. Catalysis depends on Tyr-318, which acts as the O-(5'-phospho-DNA)-tyrosine intermediate. 3 C4-type zinc fingers span residues 596-628 (CPIC…KKRC), 658-685 (CDIC…NPSC), and 707-732 (CEKC…NKIC).

This sequence belongs to the type IA topoisomerase family. As to quaternary structure, monomer. It depends on Mg(2+) as a cofactor.

It catalyses the reaction ATP-independent breakage of single-stranded DNA, followed by passage and rejoining.. In terms of biological role, releases the supercoiling and torsional tension of DNA, which is introduced during the DNA replication and transcription, by transiently cleaving and rejoining one strand of the DNA duplex. Introduces a single-strand break via transesterification at a target site in duplex DNA. The scissile phosphodiester is attacked by the catalytic tyrosine of the enzyme, resulting in the formation of a DNA-(5'-phosphotyrosyl)-enzyme intermediate and the expulsion of a 3'-OH DNA strand. The free DNA strand then undergoes passage around the unbroken strand, thus removing DNA supercoils. Finally, in the religation step, the DNA 3'-OH attacks the covalent intermediate to expel the active-site tyrosine and restore the DNA phosphodiester backbone. This Buchnera aphidicola subsp. Acyrthosiphon pisum (strain APS) (Acyrthosiphon pisum symbiotic bacterium) protein is DNA topoisomerase 1.